The chain runs to 1479 residues: ABC transporter ecdL (1479 aa).

3 helical membrane passes run 32–52 (LLFE…SVAL), 82–102 (LSNA…WLSF), and 142–162 (IASI…VEAM). Residues Asn-183 and Asn-234 are each glycosylated (N-linked (GlcNAc...) asparagine). A run of 2 helical transmembrane segments spans residues 251–271 (WGGF…PFLV) and 291–311 (SGLI…TAAF). Positions 258 to 535 (LCLIGVNYAQ…FVESLMGLRQ (278 aa)) constitute an ABC transmembrane type-1 1 domain. A glycan (N-linked (GlcNAc...) asparagine) is linked at Asn-345. The next 2 helical transmembrane spans lie at 365 to 382 (LHET…LWLL) and 391 to 411 (VAAA…SGLL). Asn-427 is a glycosylation site (N-linked (GlcNAc...) asparagine). 2 helical membrane-spanning segments follow: residues 469-489 (LLVA…TFAF) and 503-523 (PLLA…GQAV). An ABC transporter 1 domain is found at 607-835 (IVLQNHTASW…GSSLRLEELV (229 aa)). N-linked (GlcNAc...) asparagine glycosylation is found at Asn-611 and Asn-628. An ATP-binding site is contributed by 641 to 648 (GPIGSGKS). N-linked (GlcNAc...) asparagine glycans are attached at residues Asn-793 and Asn-797. The next 5 helical transmembrane spans lie at 885–905 (TIGW…VVAL), 955–975 (LFAV…LHLM), 1028–1048 (ALIG…VIVY), 1052–1072 (YLAA…MFYL), and 1135–1155 (IWLT…LVSI). Positions 932-1193 (IWLKFWTEAN…LVYNWTALEN (262 aa)) constitute an ABC transmembrane type-1 2 domain. Residue Asn-1161 is glycosylated (N-linked (GlcNAc...) asparagine). The helical transmembrane segment at 1165-1185 (ASIGLALVNLIAFGANMKGLV) threads the bilayer. N-linked (GlcNAc...) asparagine glycosylation is present at Asn-1187. In terms of domain architecture, ABC transporter 2 spans 1230-1461 (IKFKSVTASY…RSIFASLLRS (232 aa)). 1264 to 1271 (GRTGCGKS) serves as a coordination point for ATP. Residues 1460–1479 (RSGDEEPGNGHKHESEGEEE) form a disordered region. Over residues 1461–1479 (SGDEEPGNGHKHESEGEEE) the composition is skewed to basic and acidic residues.

Belongs to the ABC transporter superfamily. ABCC family. Conjugate transporter (TC 3.A.1.208) subfamily.

The protein localises to the cell membrane. Its function is as follows. ABC transporter; part of the gene cluster that mediates the biosynthesis of echinocandin B, a fungal lipidated cyclic hexapeptide that acts as an antifungal agent. In Aspergillus rugulosus (Emericella rugulosa), this protein is ABC transporter ecdL.